The chain runs to 277 residues: 3-methyl-2-oxobutanoate hydroxymethyltransferase (277 aa).

Residues D49 and D88 each contribute to the Mg(2+) site. 3-methyl-2-oxobutanoate-binding positions include 49 to 50 (DS), D88, and K118. E120 serves as a coordination point for Mg(2+). The Proton acceptor role is filled by E186.

The protein belongs to the PanB family. As to quaternary structure, homodecamer; pentamer of dimers. Requires Mg(2+) as cofactor.

It localises to the cytoplasm. It catalyses the reaction 3-methyl-2-oxobutanoate + (6R)-5,10-methylene-5,6,7,8-tetrahydrofolate + H2O = 2-dehydropantoate + (6S)-5,6,7,8-tetrahydrofolate. It functions in the pathway cofactor biosynthesis; (R)-pantothenate biosynthesis; (R)-pantoate from 3-methyl-2-oxobutanoate: step 1/2. Functionally, catalyzes the reversible reaction in which hydroxymethyl group from 5,10-methylenetetrahydrofolate is transferred onto alpha-ketoisovalerate to form ketopantoate. This is 3-methyl-2-oxobutanoate hydroxymethyltransferase from Cereibacter sphaeroides (strain ATCC 17029 / ATH 2.4.9) (Rhodobacter sphaeroides).